Reading from the N-terminus, the 194-residue chain is Small ribosomal subunit protein uS7 (194 aa).

It belongs to the universal ribosomal protein uS7 family. Part of the 30S ribosomal subunit.

In terms of biological role, one of the primary rRNA binding proteins, it binds directly to 16S rRNA where it nucleates assembly of the head domain of the 30S subunit. Is located at the subunit interface close to the decoding center. This Methanospirillum hungatei JF-1 (strain ATCC 27890 / DSM 864 / NBRC 100397 / JF-1) protein is Small ribosomal subunit protein uS7.